A 246-amino-acid chain; its full sequence is tRNA (guanine-N(7)-)-methyltransferase (246 aa).

The tract at residues 1–26 (MSDSSSSSENAPATPESPGRPPRGIK) is disordered. S-adenosyl-L-methionine contacts are provided by glutamate 74, glutamate 99, aspartate 126, and aspartate 149. The active site involves aspartate 149. Substrate-binding positions include lysine 153, aspartate 185, and 224–227 (TKFE).

The protein belongs to the class I-like SAM-binding methyltransferase superfamily. TrmB family.

It carries out the reaction guanosine(46) in tRNA + S-adenosyl-L-methionine = N(7)-methylguanosine(46) in tRNA + S-adenosyl-L-homocysteine. It participates in tRNA modification; N(7)-methylguanine-tRNA biosynthesis. Functionally, catalyzes the formation of N(7)-methylguanine at position 46 (m7G46) in tRNA. The protein is tRNA (guanine-N(7)-)-methyltransferase of Chromohalobacter salexigens (strain ATCC BAA-138 / DSM 3043 / CIP 106854 / NCIMB 13768 / 1H11).